A 306-amino-acid chain; its full sequence is Recombination-associated protein RdgC (306 aa).

Belongs to the RdgC family.

It localises to the cytoplasm. The protein localises to the nucleoid. May be involved in recombination. This chain is Recombination-associated protein RdgC, found in Pseudomonas fluorescens (strain SBW25).